Consider the following 384-residue polypeptide: Glucans biosynthesis protein C (384 aa).

The next 10 helical transmembrane spans lie at 17–37 (AWLM…THSW), 54–74 (FIHA…SYML), 91–111 (VGIP…ILLQ), 140–160 (LWFL…FTWF), 173–193 (AISL…YAAI), 212–232 (FIVM…LAFI), 240–260 (FTTP…AYLL), 274–294 (TESV…FSLG), 311–331 (ASLF…AYIT), and 338–358 (LIGF…LYEI).

The protein belongs to the acyltransferase 3 family. OpgC subfamily.

Its subcellular location is the cell membrane. It functions in the pathway glycan metabolism; osmoregulated periplasmic glucan (OPG) biosynthesis. In terms of biological role, necessary for the succinyl substitution of periplasmic glucans. Could catalyze the transfer of succinyl residues from the cytoplasmic side of the membrane to the nascent glucan backbones on the periplasmic side of the membrane. This is Glucans biosynthesis protein C from Salmonella typhimurium (strain LT2 / SGSC1412 / ATCC 700720).